Here is a 156-residue protein sequence, read N- to C-terminus: Large ribosomal subunit protein uL15 (156 aa).

Residues 1–11 (MKLNDLRDKPG) show a composition bias toward basic and acidic residues. The tract at residues 1–44 (MKLNDLRDKPGSVKARKRVGRGIGSGTGKTGGRGVKGQKSRSGV) is disordered. Positions 21–35 (RGIGSGTGKTGGRGV) are enriched in gly residues.

It belongs to the universal ribosomal protein uL15 family. In terms of assembly, part of the 50S ribosomal subunit.

In terms of biological role, binds to the 23S rRNA. The polypeptide is Large ribosomal subunit protein uL15 (Brucella abortus (strain S19)).